The chain runs to 460 residues: Transcription factor TGA10 (460 aa).

Over residues 1–11 (MQGHHQNHHQH) the composition is skewed to basic residues. 2 disordered regions span residues 1–29 (MQGHHQNHHQHLSSSSATSSHGNFMNKDG) and 43–163 (LDGQ…PKTL). A compositionally biased stretch (low complexity) spans 12-21 (LSSSSATSSH). Polar residues-rich tracts occupy residues 65–81 (TQNLAMRPPTSTLNIFP) and 121–136 (DLTNHSQFHQPPQGSK). Over residues 138-162 (IKKEGNRKGLASSDHDIPKSSDPKT) the composition is skewed to basic and acidic residues. The 45-residue stretch at 159-203 (DPKTLRRLAQNREAARKSRLRKKAYVQQLESCRIKLTQLEQEIQR) folds into the bZIP domain. Residues 161–181 (KTLRRLAQNREAARKSRLRKK) form a basic motif region. The Nuclear localization signal motif lies at 163-170 (LRRLAQNR). Residues 187–201 (LESCRIKLTQLEQEI) are leucine-zipper. The region spanning 236–455 (AAVFDMEYAR…QALSSLWLAR (220 aa)) is the DOG1 domain.

The protein belongs to the bZIP family. Homodimer. Binds DNA as a dimer. Interacts with floral glutaredoxins GRXC7/ROXY1 and GRXC8/ROXY2 in the nucleus. Interacts with TGA1, TGA2, TGA3, TGA4, TGA5, TGA6, TGA7, TGA9 and PAN. As to expression, expressed at low levels in inflorescence apex and flowers.

It is found in the nucleus. In terms of biological role, together with TGA9, basic leucine-zipper transcription factor required for anther development, probably via the activation of SPL expression in anthers and via the regulation of genes with functions in early and middle tapetal development. Required for signaling responses to pathogen-associated molecular patterns (PAMPs) such as flg22 that involves chloroplastic reactive oxygen species (ROS) production and subsequent expression of H(2)O(2)-responsive genes. The chain is Transcription factor TGA10 from Arabidopsis thaliana (Mouse-ear cress).